A 311-amino-acid polypeptide reads, in one-letter code: Pyrimidine-specific ribonucleoside hydrolase RihA (311 aa).

His-240 is a catalytic residue.

This sequence belongs to the IUNH family. RihA subfamily.

In terms of biological role, hydrolyzes with equal efficiency cytidine or uridine to ribose and cytosine or uracil, respectively. This Escherichia coli O7:K1 (strain IAI39 / ExPEC) protein is Pyrimidine-specific ribonucleoside hydrolase RihA.